The sequence spans 96 residues: Large ribosomal subunit protein uL23 (96 aa).

Belongs to the universal ribosomal protein uL23 family. As to quaternary structure, part of the 50S ribosomal subunit. Contacts protein L29, and trigger factor when it is bound to the ribosome.

One of the early assembly proteins it binds 23S rRNA. One of the proteins that surrounds the polypeptide exit tunnel on the outside of the ribosome. Forms the main docking site for trigger factor binding to the ribosome. The polypeptide is Large ribosomal subunit protein uL23 (Bacillus mycoides (strain KBAB4) (Bacillus weihenstephanensis)).